The sequence spans 334 residues: MKRISLTQYLIEEQRLHNNIPAELRLLLEVVARACKTISHAVGKGALGEVLGTAQSENVQGEVQKKLDIISNDILLEANEWGGHLAAMASEEMETIHQIPNRYPMGEYLLLFDPLDGSSNIDVNVSIGTIFSVLKAADGMQAPTEADFLQPGSKQVVAGYAVYGPQTVLVLTTGNGVQCFTLDREMGSWVMTQRDMQIPANTKEFAINASNARHWHPPVKRYVDEMLAGTTGPRAKDFNMRWIASMVADVHRILNRGGIFMYPADAREPDKPGKLRLMYEANPMAFIVEQAGGAATDGQQRILDIQPEKLHQRVPVFLGSKNEVELVTSYHKAK.

Residues glutamate 91, aspartate 113, leucine 115, and aspartate 116 each coordinate Mg(2+). Substrate-binding positions include 116-119 (DGSS), asparagine 208, and lysine 274. A Mg(2+)-binding site is contributed by glutamate 280.

The protein belongs to the FBPase class 1 family. As to quaternary structure, homotetramer. Mg(2+) serves as cofactor.

Its subcellular location is the cytoplasm. It catalyses the reaction beta-D-fructose 1,6-bisphosphate + H2O = beta-D-fructose 6-phosphate + phosphate. It participates in carbohydrate biosynthesis; gluconeogenesis. This chain is Fructose-1,6-bisphosphatase class 1, found in Janthinobacterium sp. (strain Marseille) (Minibacterium massiliensis).